A 98-amino-acid polypeptide reads, in one-letter code: Protein Frey 1 (98 aa).

Residues 13–29 (AGLSLFLHLILAVALLR) form a helical membrane-spanning segment. The tract at residues 60–87 (YGILPKHPRPRGPRPLLSRAQQRKRDGP) is disordered.

In terms of assembly, interacts with SPPL2C (via active sites); the interaction stabilizes FREY1 protein and inhibits SPPL2C proteolytic activity. Interacts with IZUMO1; the interaction retains IZUMO1 at the endoplasmic reticulum membrane and coordinates IZUMO1 complex assembly.

The protein resides in the endoplasmic reticulum membrane. Its function is as follows. Key regulator for male fertility expressed transiently in round spermatids where it recruits IZUMO1 at the endoplasmic reticulum (ER) membrane and coordinates the oolemmal binding multimeric complex (IZUMO1 complex) assembly. Upon complete assembly of the IZUMO1 complex, its ER retention is released, facilitating IZUMO1 complex export to the acrosome. Through the interaction with SPPL2C, inhibits its intramembrane protease activity directly accessing the catalytic center of an I-CLiP. The protein is Protein Frey 1 of Homo sapiens (Human).